The following is a 397-amino-acid chain: Cytochrome b (397 aa).

Transmembrane regions (helical) follow at residues 48-68 (FGSM…LLSA), 92-113 (WMLR…YAHI), 128-148 (WYFG…GYTL), and 193-213 (FYTL…LHLF). Residues H98 and H112 each contribute to the heme b site. Heme b contacts are provided by H197 and H211. A ubiquinone is bound at residue H216. Helical transmembrane passes span 241–261 (IKDL…VCVD), 303–323 (AGGV…PTLH), 335–355 (LNQV…WIGA), and 362–382 (YIIL…WTPF).

It belongs to the cytochrome b family. The main subunits of complex b-c1 are: cytochrome b, cytochrome c1 and the Rieske protein. Requires heme b as cofactor.

The protein localises to the mitochondrion inner membrane. Its function is as follows. Component of the ubiquinol-cytochrome c reductase complex (complex III or cytochrome b-c1 complex) that is part of the mitochondrial respiratory chain. The b-c1 complex mediates electron transfer from ubiquinol to cytochrome c. Contributes to the generation of a proton gradient across the mitochondrial membrane that is then used for ATP synthesis. The polypeptide is Cytochrome b (MT-CYB) (Mytilus edulis (Blue mussel)).